The following is a 507-amino-acid chain: Cell cycle serine/threonine-protein kinase hsk1 (507 aa).

Ser22 bears the Phosphoserine mark. The 366-residue stretch at 68–433 (YRLIEKIGEG…AEEALDHDFL (366 aa)) folds into the Protein kinase domain. ATP contacts are provided by residues 74–82 (IGEGTFSSV) and Lys129. The active-site Proton acceptor is the Asp216. Thr291 carries the phosphothreonine modification. The disordered stretch occupies residues 475 to 507 (FKEQEETDEPTSLSKRKRSIDEILPNDALQDGA). Ser493 carries the post-translational modification Phosphoserine.

The protein belongs to the protein kinase superfamily. Ser/Thr protein kinase family. CDC7 subfamily. As to quaternary structure, heterodimer with the regulatory subunit him1/dfp1. May form homooligomeric complexes. Interacts with mcm10. Autophosphorylated. Phosphorylated by cds1 in vitro.

It localises to the nucleus. The enzyme catalyses L-seryl-[protein] + ATP = O-phospho-L-seryl-[protein] + ADP + H(+). It catalyses the reaction L-threonyl-[protein] + ATP = O-phospho-L-threonyl-[protein] + ADP + H(+). Its activity is regulated as follows. Phosphorylation of exogenous substrates activated by Dfp1. Functionally, required for G1/S transition. Plays a role in DNA replication checkpoint signaling through regulating rad3 and cds1. Involved in the maintenance of mitotic chromosome structures during S phase through regulating the function of rad21. Required for initiation of mitotic DNA replication through phosphorylating mcm2/cdc19. Required for genome integrity. This Schizosaccharomyces pombe (strain 972 / ATCC 24843) (Fission yeast) protein is Cell cycle serine/threonine-protein kinase hsk1 (hsk1).